The following is a 183-amino-acid chain: MNREQIANALRQNQVVAYPTEAVFGLGCNPQSESAVKKLLDLKQRPVEKGLILVAPSLDFFRPFVDFEQINDEQLSRLQGKYERPTTWIVPSKSTTPYFLTGKFDSIAVRLCDHPSVKALCELTGFALTSTSANLTGEPPCRIADEVRLQFGADFPVLDETVGDARNPSEIRDLRTNQLFRQG.

The YrdC-like domain maps to 1–183; sequence MNREQIANAL…LRTNQLFRQG (183 aa).

Belongs to the SUA5 family. TsaC subfamily.

Its subcellular location is the cytoplasm. It catalyses the reaction L-threonine + hydrogencarbonate + ATP = L-threonylcarbamoyladenylate + diphosphate + H2O. In terms of biological role, required for the formation of a threonylcarbamoyl group on adenosine at position 37 (t(6)A37) in tRNAs that read codons beginning with adenine. Catalyzes the conversion of L-threonine, HCO(3)(-)/CO(2) and ATP to give threonylcarbamoyl-AMP (TC-AMP) as the acyladenylate intermediate, with the release of diphosphate. This is Threonylcarbamoyl-AMP synthase from Haemophilus influenzae (strain PittEE).